A 748-amino-acid polypeptide reads, in one-letter code: SNF-related serine/threonine-protein kinase (748 aa).

One can recognise a Protein kinase domain in the interval 16–269; sequence YDLDKTLGRG…LEEIESHPWL (254 aa). Residues 22-30 and lysine 45 contribute to the ATP site; that span reads LGRGHFAVV. The active-site Proton acceptor is aspartate 139. The residue at position 162 (serine 162) is a Phosphoserine. Position 173 is a phosphothreonine; by LKB1 (threonine 173). The UBA domain maps to 291–334; that stretch reads SEEEHNSIIQRMVLGDIADRDAIVEALETNRYNHITATYFLLAE. Serine 362, serine 390, serine 482, serine 495, and serine 518 each carry phosphoserine. Residues 383–415 form a disordered region; the sequence is SHATVPQSPARAGDNVLNGHRSKGLCDPAKKDE. A compositionally biased stretch (acidic residues) spans 491 to 503; that stretch reads EEGESDDEFDMDE. The tract at residues 491–640 is disordered; it reads EEGESDDEFD…SPSPASASAA (150 aa). Residues 522-532 show a composition bias toward basic residues; sequence VHKRYHRRKSQ. Positions 533 to 542 are enriched in low complexity; that stretch reads GRGSSCSSSE. Arginine 534 is modified (omega-N-methylarginine). Residues 549 to 558 are compositionally biased toward basic and acidic residues; that stretch reads ESRRRLDKDS. Composition is skewed to gly residues over residues 575–592 and 600–614; these read GSEG…GGGV and QGTG…GGTP. The residue at position 606 (serine 606) is a Phosphoserine. Positions 629–640 are enriched in low complexity; that stretch reads SSSPSPASASAA.

It belongs to the protein kinase superfamily. CAMK Ser/Thr protein kinase family. The cofactor is Mg(2+). Autophosphorylated. Phosphorylation on Thr-173 by STK11/LKB1 in complex with STE20-related adapter-alpha (STRADA) pseudo kinase and CAB39. As to expression, ubiquitously expressed in all tissues examined.

It is found in the nucleus. It catalyses the reaction L-seryl-[protein] + ATP = O-phospho-L-seryl-[protein] + ADP + H(+). The enzyme catalyses L-threonyl-[protein] + ATP = O-phospho-L-threonyl-[protein] + ADP + H(+). Its activity is regulated as follows. Activated by phosphorylation on Thr-173. May play a role in hematopoietic cell proliferation or differentiation. Potential mediator of neuronal apoptosis. In Mus musculus (Mouse), this protein is SNF-related serine/threonine-protein kinase.